We begin with the raw amino-acid sequence, 453 residues long: Probable tRNA methyltransferase 9B (453 aa).

S214 carries the post-translational modification Phosphoserine.

Belongs to the methyltransferase superfamily.

May modify wobble uridines in specific arginine and glutamic acid tRNAs. Acts as a tumor suppressor by promoting the expression of LIN9. This Bos taurus (Bovine) protein is Probable tRNA methyltransferase 9B (TRMT9B).